Reading from the N-terminus, the 211-residue chain is tRNA (pseudouridine(54)-N(1))-methyltransferase (211 aa).

Positions 128, 150, and 183 each coordinate S-adenosyl-L-methionine.

The protein belongs to the methyltransferase superfamily. TrmY family. In terms of assembly, homodimer.

Its subcellular location is the cytoplasm. The catalysed reaction is pseudouridine(54) in tRNA + S-adenosyl-L-methionine = N(1)-methylpseudouridine(54) in tRNA + S-adenosyl-L-homocysteine + H(+). In terms of biological role, specifically catalyzes the N1-methylation of pseudouridine at position 54 (Psi54) in tRNAs. The sequence is that of tRNA (pseudouridine(54)-N(1))-methyltransferase from Methanosarcina mazei (strain ATCC BAA-159 / DSM 3647 / Goe1 / Go1 / JCM 11833 / OCM 88) (Methanosarcina frisia).